The primary structure comprises 385 residues: 1-deoxy-D-xylulose 5-phosphate reductoisomerase (385 aa).

NADPH is bound by residues T10, G11, S12, I13, K37, and N124. 1-deoxy-D-xylulose 5-phosphate is bound at residue K125. NADPH is bound at residue E126. Mn(2+) is bound at residue D150. Positions 151, 152, 176, and 199 each coordinate 1-deoxy-D-xylulose 5-phosphate. E152 is a Mn(2+) binding site. G205 is an NADPH binding site. Residues S212, N217, K218, and E221 each contribute to the 1-deoxy-D-xylulose 5-phosphate site. E221 contributes to the Mn(2+) binding site.

It belongs to the DXR family. Requires Mg(2+) as cofactor. The cofactor is Mn(2+).

It catalyses the reaction 2-C-methyl-D-erythritol 4-phosphate + NADP(+) = 1-deoxy-D-xylulose 5-phosphate + NADPH + H(+). It functions in the pathway isoprenoid biosynthesis; isopentenyl diphosphate biosynthesis via DXP pathway; isopentenyl diphosphate from 1-deoxy-D-xylulose 5-phosphate: step 1/6. Its function is as follows. Catalyzes the NADPH-dependent rearrangement and reduction of 1-deoxy-D-xylulose-5-phosphate (DXP) to 2-C-methyl-D-erythritol 4-phosphate (MEP). The sequence is that of 1-deoxy-D-xylulose 5-phosphate reductoisomerase from Clostridium botulinum (strain 657 / Type Ba4).